Here is a 593-residue protein sequence, read N- to C-terminus: DNA primase (593 aa).

The CHC2-type zinc finger occupies 38–62 (CPFHQEKTPSFTVSDSKRFFYCFGC). The Toprim domain occupies 250 to 332 (NRSILVEGYF…EKKISFIRLP (83 aa)). Positions 256, 300, and 302 each coordinate Mg(2+).

This sequence belongs to the DnaG primase family. As to quaternary structure, monomer. Interacts with DnaB. Requires Zn(2+) as cofactor. Mg(2+) serves as cofactor.

It carries out the reaction ssDNA + n NTP = ssDNA/pppN(pN)n-1 hybrid + (n-1) diphosphate.. Functionally, RNA polymerase that catalyzes the synthesis of short RNA molecules used as primers for DNA polymerase during DNA replication. This chain is DNA primase, found in Rickettsia typhi (strain ATCC VR-144 / Wilmington).